Consider the following 151-residue polypeptide: Transcription antitermination protein NusB (151 aa).

Belongs to the NusB family.

Functionally, involved in transcription antitermination. Required for transcription of ribosomal RNA (rRNA) genes. Binds specifically to the boxA antiterminator sequence of the ribosomal RNA (rrn) operons. The sequence is that of Transcription antitermination protein NusB from Thermodesulfovibrio yellowstonii (strain ATCC 51303 / DSM 11347 / YP87).